The chain runs to 247 residues: Putative ankyrin repeat protein RBE_1110 (247 aa).

ANK repeat units lie at residues 105 to 135 and 139 to 171; these read QNKD…CIDY and EGHN…KLIT.

The chain is Putative ankyrin repeat protein RBE_1110 from Rickettsia bellii (strain RML369-C).